A 116-amino-acid polypeptide reads, in one-letter code: Nitrogenase iron-iron protein delta chain (116 aa).

Hexamer of two alpha, two beta, and two delta chains. Requires iron-sulfur cluster as cofactor.

The catalysed reaction is N2 + 8 reduced [2Fe-2S]-[ferredoxin] + 16 ATP + 16 H2O = H2 + 8 oxidized [2Fe-2S]-[ferredoxin] + 2 NH4(+) + 16 ADP + 16 phosphate + 6 H(+). Its function is as follows. The key enzymatic reactions in nitrogen fixation are catalyzed by the nitrogenase complex, which has 2 components: the iron protein (component 2) and a component 1 which is either a molybdenum-iron protein, a vanadium-iron, or an iron-iron protein. The protein is Nitrogenase iron-iron protein delta chain (anfG) of Rhodospirillum rubrum.